Here is a 159-residue protein sequence, read N- to C-terminus: Small ribosomal subunit protein bS6 (159 aa).

Over residues 93–151 (VDEHEEGPSAMMRKADRDRERDDRGPREGGFRGDREGRGDREGGGFRGDRGPRRPREDA) the composition is skewed to basic and acidic residues. The tract at residues 93–159 (VDEHEEGPSA…DADTAAASEE (67 aa)) is disordered.

The protein belongs to the bacterial ribosomal protein bS6 family.

In terms of biological role, binds together with bS18 to 16S ribosomal RNA. The sequence is that of Small ribosomal subunit protein bS6 from Rhodopseudomonas palustris (strain HaA2).